The sequence spans 196 residues: Recombination protein RecR (196 aa).

The segment at 57–72 (CERCNTFTEAPVCSTC) adopts a C4-type zinc-finger fold. The Toprim domain maps to 80 to 175 (RQLCVVETPA…SVTRLARGVP (96 aa)).

This sequence belongs to the RecR family.

Its function is as follows. May play a role in DNA repair. It seems to be involved in an RecBC-independent recombinational process of DNA repair. It may act with RecF and RecO. The protein is Recombination protein RecR of Methylibium petroleiphilum (strain ATCC BAA-1232 / LMG 22953 / PM1).